We begin with the raw amino-acid sequence, 360 residues long: Glycoprotein-N-acetylgalactosamine 3-beta-galactosyltransferase 1 (360 aa).

The Cytoplasmic portion of the chain corresponds to 1-7 (MSIICAK). The chain crosses the membrane as a helical; Signal-anchor for type II membrane protein span at residues 8 to 28 (VAWLPLTLGTAMGFLITFYLA). Residues 29–360 (RTLLERNSQP…SDFLEPPMES (332 aa)) are Lumenal-facing. A disulfide bridge connects residues C79 and C103. UDP is bound by residues M82, E126, G127, R128, and K134. N148 carries N-linked (GlcNAc...) asparagine glycosylation. Position 157 (D157) interacts with UDP. Residues D157 and D159 each coordinate Mn(2+). The N-linked (GlcNAc...) asparagine glycan is linked to N173. An intrachain disulfide couples C220 to C234. An a glycoprotein-binding site is contributed by W274. Cysteines 289 and 290 form a disulfide. Residues H298 and Y299 each coordinate UDP. Position 298 (H298) interacts with Mn(2+). N341 and N347 each carry an N-linked (GlcNAc...) asparagine glycan.

This sequence belongs to the glycosyltransferase 31 family. Beta3-Gal-T subfamily. Homodimer; disulfide-linked. It depends on Mn(2+) as a cofactor.

Its subcellular location is the membrane. The catalysed reaction is an N-acetyl-alpha-D-galactosaminyl derivative + UDP-alpha-D-galactose = a beta-D-galactosyl-(1-&gt;3)-N-acetyl-alpha-D-galactosaminyl derivative + UDP + H(+). It functions in the pathway protein modification; protein glycosylation. In terms of biological role, glycosyltransferase that generates the core 1 O-glycan Gal-beta1-3GalNAc-alpha1-Ser/Thr (T antigen), which is a precursor for many extended O-glycans in glycoproteins. This Xenopus laevis (African clawed frog) protein is Glycoprotein-N-acetylgalactosamine 3-beta-galactosyltransferase 1 (c1galt1).